A 468-amino-acid chain; its full sequence is MFTAPGMATTQERPYSCSVCGKSFQYSAVLLRHERAHGGDKRFCCLECGERCARAADLRAHRWTHAGQTLYICSECGQSFSHSGLLDLHLGTHRRRSRTRPCRLCGRRFPHVPALLLHRARQHPPEKPHRCPLCARSFRQSALPFHLARAHPPEIITVTAPSPSTLYHCTQCPRAFHSSAGLRNHSRIHVVPSLSDPGTEAHLCGICGKSFSKSSTLTRHLQRHSGEKPFKCPECGKGFLESATLVRHQRTHTGEKPYACSDCGRCFSESSTLLRHQRSHQGERPHVCATCGKGFGQRYDLVVHQRSHTGERPFPCPQCGRGFTDRSDLTKHLRTHTGEKPYHCELCGKRFTCISNLNVHLRNHAGHKPHKCPECGKSFSVASKLALHRKTHLGERTAECTECGKFFSHGRSLSQHQRSHRRARAAAMAATTTTTVVTEVTIGPSLTLTGPTEQEKSGLLVSPFQETC.

4 C2H2-type zinc fingers span residues 15–37, 43–65, 71–93, and 100–123; these read YSCSVCGKSFQYSAVLLRHERAH, FCCLECGERCARAADLRAHRWTH, YICSECGQSFSHSGLLDLHLGTH, and RPCRLCGRRFPHVPALLLHRARQH. Residues 129–151 form a C2H2-type 5; degenerate zinc finger; it reads HRCPLCARSFRQSALPFHLARAH. 9 consecutive C2H2-type zinc fingers follow at residues 167 to 189, 202 to 224, 230 to 252, 258 to 280, 286 to 308, 314 to 336, 342 to 364, 370 to 392, and 398 to 420; these read YHCTQCPRAFHSSAGLRNHSRIH, HLCGICGKSFSKSSTLTRHLQRH, FKCPECGKGFLESATLVRHQRTH, YACSDCGRCFSESSTLLRHQRSH, HVCATCGKGFGQRYDLVVHQRSH, FPCPQCGRGFTDRSDLTKHLRTH, YHCELCGKRFTCISNLNVHLRNH, HKCPECGKSFSVASKLALHRKTH, and AECTECGKFFSHGRSLSQHQRSH.

Belongs to the krueppel C2H2-type zinc-finger protein family.

It is found in the nucleus. May be involved in transcriptional regulation. The protein is Zinc finger protein 672 (Znf672) of Mus musculus (Mouse).